A 397-amino-acid polypeptide reads, in one-letter code: DNA-directed RNA polymerase subunit Rpo1C (397 aa).

This sequence belongs to the RNA polymerase beta' chain family. As to quaternary structure, part of the RNA polymerase complex.

Its subcellular location is the cytoplasm. The enzyme catalyses RNA(n) + a ribonucleoside 5'-triphosphate = RNA(n+1) + diphosphate. Functionally, DNA-dependent RNA polymerase (RNAP) catalyzes the transcription of DNA into RNA using the four ribonucleoside triphosphates as substrates. Forms part of the jaw domain. The sequence is that of DNA-directed RNA polymerase subunit Rpo1C from Halobacterium salinarum (strain ATCC 29341 / DSM 671 / R1).